A 324-amino-acid polypeptide reads, in one-letter code: E3 ubiquitin-protein ligase SIAH2 (324 aa).

The span at 1-15 shows a compositional bias: polar residues; the sequence is MSRPSSTGPSANKPC. A disordered region spans residues 1–42; sequence MSRPSSTGPSANKPCSKQPPPQPQHTPSPAAPPAAATISAAG. Phosphoserine is present on Ser6. Position 16 is a phosphoserine; by DYRK2 (Ser16). A compositionally biased stretch (pro residues) spans 17–32; the sequence is KQPPPQPQHTPSPAAP. A Phosphothreonine; by DYRK2 modification is found at Thr26. Phosphoserine; by DYRK2 and MAPK14 is present on Ser28. Low complexity predominate over residues 33–42; the sequence is PAAATISAAG. Ser68 is subject to Phosphoserine; by DYRK2. The segment at 80–115 adopts an RING-type zinc-finger fold; sequence CPVCFDYVLPPILQCQAGHLVCNQCRQKLSCCPTCR. A Phosphothreonine; by DYRK2 modification is found at Thr119. Positions 130–322 are SBD; the sequence is VASAVLFPCK…LGINVTISTC (193 aa). Residues 133 to 193 form an SIAH-type zinc finger; sequence AVLFPCKYAT…VMSHLMHAHK (61 aa). Residues Cys138, Cys145, His157, Cys161, Cys168, Cys175, His187, and His192 each coordinate Zn(2+).

It belongs to the SINA (Seven in absentia) family. Homodimer. Interacts with UBE2E2. Interacts with PEG3. Interacts with VAV1, without mediating its ubiquitin-mediated degradation. Interacts with CACYBP/SIP. Probable component of some large E3 complex possibly composed of UBE2D1, SIAH2, CACYBP/SIP, SKP1, APC and TBL1X. Interacts with PEG10, which may inhibit its activity. Interacts with EGLN2 and SNCAIP. Interacts with DYRK2. Interacts with NR1D1 and NR1D2. Interacts with DCC. Interacts with AXIN1. Phosphorylated at Ser-28 by MAPK14, which mediates the degradation by the proteasome of EGLN3. Phosphorylated at Ser-28 by DYRK2; this increases the ubiquitin ligase activity and promotes degradation of EGLN3. In terms of tissue distribution, widely expressed at low level.

It localises to the cytoplasm. Its subcellular location is the nucleus. It catalyses the reaction S-ubiquitinyl-[E2 ubiquitin-conjugating enzyme]-L-cysteine + [acceptor protein]-L-lysine = [E2 ubiquitin-conjugating enzyme]-L-cysteine + N(6)-ubiquitinyl-[acceptor protein]-L-lysine.. It participates in protein modification; protein ubiquitination. Its activity is regulated as follows. Inhibited by interaction with SNCAIP (isoform 2, but not isoform 1). May be inhibited by interaction with PEG10. In terms of biological role, E3 ubiquitin-protein ligase that mediates ubiquitination and subsequent proteasomal degradation of target proteins. E3 ubiquitin ligases accept ubiquitin from an E2 ubiquitin-conjugating enzyme in the form of a thioester and then directly transfers the ubiquitin to targeted substrates. Mediates E3 ubiquitin ligase activity either through direct binding to substrates or by functioning as the essential RING domain subunit of larger E3 complexes. Triggers the ubiquitin-mediated degradation of many substrates, including proteins involved in transcription regulation (GPS2, POU2AF1, PML, NCOR1), a cell surface receptor (DCC), an antiapoptotic protein (BAG1), and a protein involved in synaptic vesicle function in neurons (SYP). Mediates ubiquitination and proteasomal degradation of DYRK2 in response to hypoxia. It is thereby involved in apoptosis, tumor suppression, cell cycle, transcription and signaling processes. Has some overlapping function with SIAH1. Triggers the ubiquitin-mediated degradation of TRAF2, whereas SIAH1 does not. Promotes monoubiquitination of SNCA. Regulates cellular clock function via ubiquitination of the circadian transcriptional repressors NR1D1 and NR1D2 leading to their proteasomal degradation. Plays an important role in mediating the rhythmic degradation/clearance of NR1D1 and NR1D2 contributing to their circadian profile of protein abundance. Mediates ubiquitination and degradation of EGLN2 and EGLN3 in response to the unfolded protein response (UPR), leading to their degradation and subsequent stabilization of ATF4. Also part of the Wnt signaling pathway in which it mediates the Wnt-induced ubiquitin-mediated proteasomal degradation of AXIN1. The sequence is that of E3 ubiquitin-protein ligase SIAH2 (SIAH2) from Homo sapiens (Human).